A 330-amino-acid polypeptide reads, in one-letter code: MTLIVTGAAGFIGANIVKALNERGETRIIAVDNLTRADKFRNLVDCEIDDYLDKTEFVERFARGDFGKVRAVFHEGACSDTMETDGRYMMDNNFRYSRAVLDTCLAQGTQFLYASSAAIYGGSTRFVEERDVEAPLNVYGYSKFLFDQVIRRVLPSAKSQIAGFRYFNVYGPRETHKGRMASVAFHNFNQFRAEGKVKLFGEYNGYAPGEQTRDFVSVEDVTKVNLFFFDHPEKSGIFNLGTGRAQPFNDIASTVVNTLRALDNQAPLTLAQQVEQGLIEYVPFPDALRGKYQCFTQADQTKLRAAGYDAPFLTVQEGVDRYVRWLSGQV.

Residues 11 to 12 (FI), 32 to 33 (DN), K39, K54, 75 to 79 (EGACS), and N92 each bind NADP(+). The Proton acceptor role is filled by Y139. K143 provides a ligand contact to NADP(+). N168 lines the substrate pocket. NADP(+) is bound by residues V169 and K177. Residue K177 is the Proton acceptor of the active site. Residues R179, H186, 200-203 (FGEY), R213, and Y292 contribute to the substrate site.

The protein belongs to the NAD(P)-dependent epimerase/dehydratase family. HldD subfamily. Homopentamer. Requires NADP(+) as cofactor.

It catalyses the reaction ADP-D-glycero-beta-D-manno-heptose = ADP-L-glycero-beta-D-manno-heptose. It participates in nucleotide-sugar biosynthesis; ADP-L-glycero-beta-D-manno-heptose biosynthesis; ADP-L-glycero-beta-D-manno-heptose from D-glycero-beta-D-manno-heptose 7-phosphate: step 4/4. Its function is as follows. Catalyzes the interconversion between ADP-D-glycero-beta-D-manno-heptose and ADP-L-glycero-beta-D-manno-heptose via an epimerization at carbon 6 of the heptose. This is ADP-L-glycero-D-manno-heptose-6-epimerase from Burkholderia cenocepacia (strain HI2424).